A 961-amino-acid chain; its full sequence is Ubiquitin carboxyl-terminal hydrolase 4 (961 aa).

In terms of domain architecture, DUSP spans 11–122 (PDVETQKTEL…GQQPIVRKVV (112 aa)). The necessary for interaction with SART3 stretch occupies residues 27–216 (TLQRGAQWYL…LYQGQVLVIE (190 aa)). Positions 133–141 (VEVYLLELK) match the Nuclear export signal motif. The 85-residue stretch at 142-226 (LCENSDPTNV…PQNEDGTWPR (85 aa)) folds into the Ubiquitin-like 1 domain. The disordered stretch occupies residues 219-257 (NEDGTWPRQTLQSKSSTAPSRNFTTSSKPSASPYSSMSA). Polar residues predominate over residues 225 to 243 (PRQTLQSKSSTAPSRNFTT). Positions 229–295 (LQSKSSTAPS…SYNCQEPPSP (67 aa)) are required for USP4 activation by providing conformational flexibility between the DUSP and catalytic domains. Low complexity predominate over residues 244-257 (SSKPSASPYSSMSA). Positions 302–921 (CGLGNLGNTC…AAYVLFYQRR (620 aa)) constitute a USP domain. Residue cysteine 311 is part of the active site. The tract at residues 384–386 (PQF) is regulates ubiquitin dissociation. Residues 405-407 (LHE) form a necessary for interaction with RBL2 region. Residue serine 445 is modified to Phosphoserine. The segment at 459-463 (LVCPE) is necessary for interaction with RB1 and RBL2. Zn(2+) contacts are provided by cysteine 461 and cysteine 464. Positions 483-571 (LKKDRIMEVF…IFVYEICTTP (89 aa)) constitute a Ubiquitin-like 2 domain. Residues 485–773 (KDRIMEVFLV…SQPQKKKKAA (289 aa)) are interacts with DUSP and ubiquitin-like 1 domains and is required for USP4 activation. The segment at 641–700 (SSPLEPGACNGSRGSYEGDEEEMDHQEEGKEQLSEVEESGEDSQGGDPTETTQKAKGPPR) is disordered. A phosphoserine mark is found at serine 655, serine 674, and serine 679. Positions 765–770 (QPQKKK) match the Nuclear localization signal motif. Residues cysteine 797 and cysteine 800 each coordinate Zn(2+). Residue histidine 879 is part of the active site. The segment at 924–961 (ECPSTSSPVSFPGSDGGAKLSSSQQDLGEEEAYTMDTN) is disordered. A compositionally biased stretch (acidic residues) spans 950 to 961 (LGEEEAYTMDTN).

This sequence belongs to the peptidase C19 family. USP4 subfamily. As to quaternary structure, interacts with RB1 (both dephosphorylated and hypophosphorylated forms). Interacts with RBL1 and RBL2. Interacts with ADORA2A (via cytoplasmic C-terminus); the interaction is direct. Interacts with SART3; recruits USP4 to its substrate PRPF3. Phosphorylated at Ser-445 by PKB/AKT1 in response to EGF stimulus, promoting its ability deubiquitinate RHEB. Post-translationally, monoubiquitinated by TRIM21. Ubiquitination does not lead to its proteasomal degradation. Autodeubiquitinated. In terms of tissue distribution, expressed in hippocampus and striatum (at protein level).

It localises to the cytoplasm. The protein resides in the nucleus. The catalysed reaction is Thiol-dependent hydrolysis of ester, thioester, amide, peptide and isopeptide bonds formed by the C-terminal Gly of ubiquitin (a 76-residue protein attached to proteins as an intracellular targeting signal).. Its activity is regulated as follows. The completion of the deubiquitinase reaction is mediated by the DUSP and ubiquitin-like 1 domains which promotes the release of ubiquitin from the catalytic site enabling subsequent reactions to occur. Deubiquitinating enzyme that removes conjugated ubiquitin from target proteins. Deubiquitinates PDPK1. Deubiquitinates TRIM21. Deubiquitinates receptor ADORA2A which increases the amount of functional receptor at the cell surface. Deubiquitinates HAS2. Deubiquitinates RHEB in response to EGF signaling, promoting mTORC1 signaling. May regulate mRNA splicing through deubiquitination of the U4 spliceosomal protein PRPF3. This may prevent its recognition by the U5 component PRPF8 thereby destabilizing interactions within the U4/U6.U5 snRNP. May also play a role in the regulation of quality control in the ER. The protein is Ubiquitin carboxyl-terminal hydrolase 4 (Usp4) of Rattus norvegicus (Rat).